Consider the following 81-residue polypeptide: Photosystem I iron-sulfur center (81 aa).

4Fe-4S ferredoxin-type domains follow at residues 1-31 and 39-68; these read MAHS…MVPW and IASA…VRVY. 8 residues coordinate [4Fe-4S] cluster: C11, C14, C17, C21, C48, C51, C54, and C58.

As to quaternary structure, the eukaryotic PSI reaction center is composed of at least 11 subunits. [4Fe-4S] cluster serves as cofactor.

It is found in the plastid. It localises to the chloroplast thylakoid membrane. The enzyme catalyses reduced [plastocyanin] + hnu + oxidized [2Fe-2S]-[ferredoxin] = oxidized [plastocyanin] + reduced [2Fe-2S]-[ferredoxin]. Functionally, apoprotein for the two 4Fe-4S centers FA and FB of photosystem I (PSI); essential for photochemical activity. FB is the terminal electron acceptor of PSI, donating electrons to ferredoxin. The C-terminus interacts with PsaA/B/D and helps assemble the protein into the PSI complex. Required for binding of PsaD and PsaE to PSI. PSI is a plastocyanin-ferredoxin oxidoreductase, converting photonic excitation into a charge separation, which transfers an electron from the donor P700 chlorophyll pair to the spectroscopically characterized acceptors A0, A1, FX, FA and FB in turn. The polypeptide is Photosystem I iron-sulfur center (Welwitschia mirabilis (Tree tumbo)).